A 540-amino-acid chain; its full sequence is Bifunctional pantoate ligase/cytidylate kinase (540 aa).

Positions 1-280 (MQWLRTVAAL…VGQTRLIDNL (280 aa)) are pantoate--beta-alanine ligase. Residue 28–35 (MGSLHEGH) participates in ATP binding. Catalysis depends on His-35, which acts as the Proton donor. Gln-59 contributes to the (R)-pantoate binding site. Residue Gln-59 participates in beta-alanine binding. 150-153 (GQKD) is an ATP binding site. Gln-156 is a (R)-pantoate binding site. ATP contacts are provided by residues Val-179 and 187-190 (YSSR). The cytidylate kinase stretch occupies residues 281–540 (LLSPEGVDPL…RSGAAHFDII (260 aa)). Positions 288-307 (DPLPQEQQSAVPPSPKRGRR) are disordered.

This sequence in the N-terminal section; belongs to the pantothenate synthetase family. In the C-terminal section; belongs to the cytidylate kinase family. Type 1 subfamily.

The protein localises to the cytoplasm. The catalysed reaction is (R)-pantoate + beta-alanine + ATP = (R)-pantothenate + AMP + diphosphate + H(+). It carries out the reaction CMP + ATP = CDP + ADP. The enzyme catalyses dCMP + ATP = dCDP + ADP. It functions in the pathway cofactor biosynthesis; (R)-pantothenate biosynthesis; (R)-pantothenate from (R)-pantoate and beta-alanine: step 1/1. In terms of biological role, catalyzes the condensation of pantoate with beta-alanine in an ATP-dependent reaction via a pantoyl-adenylate intermediate. Its function is as follows. Catalyzes the transfer of a phosphate group from ATP to either CMP or dCMP to form CDP or dCDP and ADP, respectively. This chain is Bifunctional pantoate ligase/cytidylate kinase, found in Synechococcus sp. (strain JA-3-3Ab) (Cyanobacteria bacterium Yellowstone A-Prime).